Here is a 354-residue protein sequence, read N- to C-terminus: Uroporphyrinogen decarboxylase (354 aa).

Substrate is bound by residues 27-31 (RQAGR), Asp-77, Tyr-154, Thr-209, and His-327.

This sequence belongs to the uroporphyrinogen decarboxylase family. As to quaternary structure, homodimer.

The protein resides in the cytoplasm. It carries out the reaction uroporphyrinogen III + 4 H(+) = coproporphyrinogen III + 4 CO2. It functions in the pathway porphyrin-containing compound metabolism; protoporphyrin-IX biosynthesis; coproporphyrinogen-III from 5-aminolevulinate: step 4/4. Catalyzes the decarboxylation of four acetate groups of uroporphyrinogen-III to yield coproporphyrinogen-III. In Hydrogenovibrio crunogenus (strain DSM 25203 / XCL-2) (Thiomicrospira crunogena), this protein is Uroporphyrinogen decarboxylase.